We begin with the raw amino-acid sequence, 669 residues long: NAD-dependent malic enzyme, mitochondrial (669 aa).

Polar residues predominate over residues 33–43; the sequence is IQQSRLYSSNT. The interval 33–68 is disordered; that stretch reads IQQSRLYSSNTRSHKATTTRENTFQKPYSDEEVTKT. Position 142 (arginine 142) interacts with fumarate. The active-site Proton donor is the tyrosine 187. Lysine 259 (proton acceptor) is an active-site residue. The a divalent metal cation site is built by glutamate 330, aspartate 331, and aspartate 354. Residues alanine 387 and alanine 390 each contribute to the NAD(+) site. (S)-malate is bound by residues asparagine 499 and asparagine 539.

The protein belongs to the malic enzymes family. The cofactor is Mg(2+). It depends on Mn(2+) as a cofactor.

It localises to the mitochondrion matrix. It catalyses the reaction (S)-malate + NAD(+) = pyruvate + CO2 + NADH. It carries out the reaction oxaloacetate + H(+) = pyruvate + CO2. Its function is as follows. NAD-dependent mitochondrial malic enzyme that catalyzes the oxidative decarboxylation of malate to pyruvate. The chain is NAD-dependent malic enzyme, mitochondrial (MAE1) from Saccharomyces cerevisiae (strain ATCC 204508 / S288c) (Baker's yeast).